Reading from the N-terminus, the 250-residue chain is Coproheme decarboxylase (250 aa).

Fe-coproporphyrin III-binding positions include Arg-131, 145-149, His-172, and Gln-185; that span reads YPMNK. The active site involves Tyr-145.

It belongs to the ChdC family. Type 1 subfamily. The cofactor is Fe-coproporphyrin III.

It carries out the reaction Fe-coproporphyrin III + 2 H2O2 + 2 H(+) = heme b + 2 CO2 + 4 H2O. The catalysed reaction is Fe-coproporphyrin III + H2O2 + H(+) = harderoheme III + CO2 + 2 H2O. It catalyses the reaction harderoheme III + H2O2 + H(+) = heme b + CO2 + 2 H2O. The protein operates within porphyrin-containing compound metabolism; protoheme biosynthesis. Functionally, involved in coproporphyrin-dependent heme b biosynthesis. Catalyzes the decarboxylation of Fe-coproporphyrin III (coproheme) to heme b (protoheme IX), the last step of the pathway. The reaction occurs in a stepwise manner with a three-propionate intermediate. This Staphylococcus aureus (strain MRSA252) protein is Coproheme decarboxylase.